The chain runs to 394 residues: Aspergillopepsin-1 (394 aa).

An N-terminal signal peptide occupies residues 1-20 (MVVFSKVTAAVFGLATIASA). Positions 21–69 (APAPPTRKGFTVQQQARPAQKKQVNLPAMYAHALTKFGGSVPESVKVAA) are cleaved as a propeptide — activation peptide. Positions 85 to 391 (YLTPVNVGGT…DSEGPRLGFA (307 aa)) constitute a Peptidase A1 domain. Catalysis depends on residues aspartate 101 and aspartate 283. Cysteine 319 and cysteine 354 form a disulfide bridge.

Belongs to the peptidase A1 family. As to quaternary structure, monomer.

It localises to the secreted. The enzyme catalyses Hydrolysis of proteins with broad specificity. Generally favors hydrophobic residues in P1 and P1', but also accepts Lys in P1, which leads to activation of trypsinogen. Does not clot milk.. Secreted aspartic endopeptidase that allows assimilation of proteinaceous substrates. The scissile peptide bond is attacked by a nucleophilic water molecule activated by two aspartic residues in the active site. Shows a broad primary substrate specificity. Favors hydrophobic residues at the P1 and P1' positions, but also accepts a lysine residue in the P1 position, leading to the activation of trypsinogen and chymotrypsinogen A. In Aspergillus clavatus (strain ATCC 1007 / CBS 513.65 / DSM 816 / NCTC 3887 / NRRL 1 / QM 1276 / 107), this protein is Aspergillopepsin-1 (pepA).